Consider the following 211-residue polypeptide: Redox-sensing transcriptional repressor Rex (211 aa).

A DNA-binding region (H-T-H motif) is located at residues 17–56; the sequence is LYYRFVSILKGKGIDRVNSKTISEALQIDSATIRRDFSYF. 91–96 is a binding site for NAD(+); it reads GIGNLG.

The protein belongs to the transcriptional regulatory Rex family. As to quaternary structure, homodimer.

It localises to the cytoplasm. Its function is as follows. Modulates transcription in response to changes in cellular NADH/NAD(+) redox state. This chain is Redox-sensing transcriptional repressor Rex, found in Staphylococcus epidermidis (strain ATCC 35984 / DSM 28319 / BCRC 17069 / CCUG 31568 / BM 3577 / RP62A).